Here is a 216-residue protein sequence, read N- to C-terminus: 3-isopropylmalate dehydratase small subunit (216 aa).

This sequence belongs to the LeuD family. LeuD type 1 subfamily. In terms of assembly, heterodimer of LeuC and LeuD.

The enzyme catalyses (2R,3S)-3-isopropylmalate = (2S)-2-isopropylmalate. It participates in amino-acid biosynthesis; L-leucine biosynthesis; L-leucine from 3-methyl-2-oxobutanoate: step 2/4. Catalyzes the isomerization between 2-isopropylmalate and 3-isopropylmalate, via the formation of 2-isopropylmaleate. The chain is 3-isopropylmalate dehydratase small subunit from Bordetella avium (strain 197N).